A 257-amino-acid polypeptide reads, in one-letter code: Outer membrane protein YaiO (257 aa).

Residues 1-19 (MIKRTLLAAAIFSALPAYA) form the signal peptide.

It localises to the cell outer membrane. This Escherichia coli (strain K12) protein is Outer membrane protein YaiO (yaiO).